Reading from the N-terminus, the 537-residue chain is Cytochrome P450 4F6 (537 aa).

Cys-468 provides a ligand contact to heme.

Belongs to the cytochrome P450 family. Heme is required as a cofactor. As to expression, high expression in liver and kidney. Lower expression in brain.

Its subcellular location is the endoplasmic reticulum membrane. It is found in the microsome membrane. It catalyses the reaction an organic molecule + reduced [NADPH--hemoprotein reductase] + O2 = an alcohol + oxidized [NADPH--hemoprotein reductase] + H2O + H(+). The polypeptide is Cytochrome P450 4F6 (Cyp4f6) (Rattus norvegicus (Rat)).